A 223-amino-acid chain; its full sequence is MRLVIARCSVDYAGRLTAHLPSAPRLILVKADGSVSIHADDRAYKPLNWMSPPCTLKEGSGDEEGVWTVINKAGEKLIITMEEILHDSSHELGVDPGLIKDGVEAHLQELLADRIETLGDGYTLIRREYMTAIGPVDILCRDATGQTVAVEIKRRGEIDGVEQLTRYLELLNRDPHLAPVRGVFAAQEIKPQARVLATDRGIGCTVLDYNAMRGIEDDKLRLF.

The protein belongs to the NucS endonuclease family.

Its subcellular location is the cytoplasm. Its function is as follows. Cleaves both 3' and 5' ssDNA extremities of branched DNA structures. The polypeptide is Endonuclease NucS (Streptomyces avermitilis (strain ATCC 31267 / DSM 46492 / JCM 5070 / NBRC 14893 / NCIMB 12804 / NRRL 8165 / MA-4680)).